Consider the following 151-residue polypeptide: MPKFYCEYCSIYLTHSSPAGRKQHSQGRKHISAKVEYFQRLVREQFFQPPVFLGQTPPIFPGNFRAINHSLGPPMMGVFPGFAPLQTPNIIPQGMMNGIPGGLPGPIPGVPPVPVPMPAIPVIPTELPNMKIDLNQHNAPSVNSTSTTGAQ.

Residues 4–36 (FYCEYCSIYLTHSSPAGRKQHSQGRKHISAKVE) form a Matrin-type zinc finger.

The protein belongs to the U1 small nuclear ribonucleoprotein C family. In terms of assembly, U1 snRNP is composed of the 7 core Sm proteins B/B', D1, D2, D3, E, F and G that assemble in a heptameric protein ring on the Sm site of the small nuclear RNA to form the core snRNP, and at least 3 U1 snRNP-specific proteins U1-70K, U1-A and U1-C. U1-C interacts with U1 snRNA and the 5' splice-site region of the pre-mRNA.

It localises to the nucleus. Component of the spliceosomal U1 snRNP, which is essential for recognition of the pre-mRNA 5' splice-site and the subsequent assembly of the spliceosome. U1-C is directly involved in initial 5' splice-site recognition for both constitutive and regulated alternative splicing. The interaction with the 5' splice-site seems to precede base-pairing between the pre-mRNA and the U1 snRNA. Stimulates commitment or early (E) complex formation by stabilizing the base pairing of the 5' end of the U1 snRNA and the 5' splice-site region. This is U1 small nuclear ribonucleoprotein C from Theileria annulata.